The primary structure comprises 194 residues: Fe/S biogenesis protein NfuA (194 aa).

2 residues coordinate [4Fe-4S] cluster: C151 and C154.

The protein belongs to the NfuA family. As to quaternary structure, homodimer. [4Fe-4S] cluster is required as a cofactor.

In terms of biological role, involved in iron-sulfur cluster biogenesis. Binds a 4Fe-4S cluster, can transfer this cluster to apoproteins, and thereby intervenes in the maturation of Fe/S proteins. Could also act as a scaffold/chaperone for damaged Fe/S proteins. The sequence is that of Fe/S biogenesis protein NfuA from Aliivibrio salmonicida (strain LFI1238) (Vibrio salmonicida (strain LFI1238)).